The chain runs to 263 residues: uncharacterized protein (263 aa).

This is an uncharacterized protein from Archaeoglobus fulgidus (strain ATCC 49558 / DSM 4304 / JCM 9628 / NBRC 100126 / VC-16).